Here is a 267-residue protein sequence, read N- to C-terminus: UPF0173 metal-dependent hydrolase THEYE_A0282 (267 aa).

Belongs to the UPF0173 family.

The protein is UPF0173 metal-dependent hydrolase THEYE_A0282 of Thermodesulfovibrio yellowstonii (strain ATCC 51303 / DSM 11347 / YP87).